We begin with the raw amino-acid sequence, 84 residues long: DNA-directed RNA polymerase subunit Rpo5 (84 aa).

This sequence belongs to the archaeal Rpo5/eukaryotic RPB5 RNA polymerase subunit family. In terms of assembly, part of the 13-subunit RNA polymerase complex.

Its subcellular location is the cytoplasm. It catalyses the reaction RNA(n) + a ribonucleoside 5'-triphosphate = RNA(n+1) + diphosphate. Its function is as follows. DNA-dependent RNA polymerase (RNAP) catalyzes the transcription of DNA into RNA using the four ribonucleoside triphosphates as substrates. The polypeptide is DNA-directed RNA polymerase subunit Rpo5 (Saccharolobus solfataricus (strain ATCC 35092 / DSM 1617 / JCM 11322 / P2) (Sulfolobus solfataricus)).